Consider the following 255-residue polypeptide: tRNA (adenine(58)-N(1))-methyltransferase TrmI (255 aa).

Residues 104 to 107 (SGGL), E125, H130, E155, and D170 each bind S-adenosyl-L-methionine.

It belongs to the class I-like SAM-binding methyltransferase superfamily. TRM61 family. As to quaternary structure, homotetramer composed of a dimer of dimers.

The catalysed reaction is adenosine(58) in tRNA + S-adenosyl-L-methionine = N(1)-methyladenosine(58) in tRNA + S-adenosyl-L-homocysteine + H(+). Functionally, catalyzes the S-adenosyl-L-methionine-dependent formation of N(1)-methyladenine at position 58 (m1A58) in tRNA. In Thermus thermophilus (strain ATCC 27634 / DSM 579 / HB8), this protein is tRNA (adenine(58)-N(1))-methyltransferase TrmI (trmI).